The primary structure comprises 103 residues: Large ribosomal subunit protein uL23c (103 aa).

It belongs to the universal ribosomal protein uL23 family. Part of the 50S ribosomal subunit.

It is found in the plastid. The protein localises to the chloroplast. In terms of biological role, binds to 23S rRNA. The polypeptide is Large ribosomal subunit protein uL23c (rpl23) (Gracilaria tenuistipitata var. liui (Red alga)).